A 20-amino-acid chain; its full sequence is Alkaline phosphatase (20 aa).

As to expression, expressed by the venom gland.

It localises to the secreted. The enzyme catalyses a phosphate monoester + H2O = an alcohol + phosphate. Functionally, has hemorrhagic activity. This is Alkaline phosphatase from Deinagkistrodon acutus (Hundred-pace snake).